The following is a 197-amino-acid chain: MLERIRDSFTESIQTKIDAAEALPESIEKAAEMMVQCLLGGNKILSCGNGGSAGDAQHFSAELLNRYEIERPPLPAIALSCDTSTITAIANDYSYDEIFSKQIFALGQPGDILLAISTSGNSGNIIKAMEAALSRDMTIVALTGKDGGAMAGLMSAGDVEIRVPSNVTARIQEVHLLVIHCLCDNIDRTLFPQDEQA.

The region spanning methionine 34–glutamine 196 is the SIS domain. Residue asparagine 49–glycine 51 coordinates substrate. Histidine 58 and glutamate 62 together coordinate Zn(2+). Substrate is bound by residues glutamate 62, asparagine 91–aspartate 92, serine 117–serine 119, serine 122, and glutamine 172. Zn(2+) is bound by residues glutamine 172 and histidine 180.

This sequence belongs to the SIS family. GmhA subfamily. Homotetramer. Requires Zn(2+) as cofactor.

Its subcellular location is the cytoplasm. The catalysed reaction is 2 D-sedoheptulose 7-phosphate = D-glycero-alpha-D-manno-heptose 7-phosphate + D-glycero-beta-D-manno-heptose 7-phosphate. It participates in carbohydrate biosynthesis; D-glycero-D-manno-heptose 7-phosphate biosynthesis; D-glycero-alpha-D-manno-heptose 7-phosphate and D-glycero-beta-D-manno-heptose 7-phosphate from sedoheptulose 7-phosphate: step 1/1. In terms of biological role, catalyzes the isomerization of sedoheptulose 7-phosphate in D-glycero-D-manno-heptose 7-phosphate. The chain is Phosphoheptose isomerase from Shewanella frigidimarina (strain NCIMB 400).